The chain runs to 600 residues: Sulfite reductase [NADPH] flavoprotein alpha-component (600 aa).

The Flavodoxin-like domain occupies 63–201; it reads ITLISASQTG…VADQWRKQLT (139 aa). Residues 69 to 74, 116 to 119, and 152 to 161 each bind FMN; these read SQTGNA, STQG, and LGDTSYERFC. One can recognise an FAD-binding FR-type domain in the interval 235–449; sequence QAPLTAALAT…IEHNDNFRLP (215 aa). FAD contacts are provided by residues Thr-323, His-357, 387 to 390, 405 to 407, Tyr-411, and 420 to 423; these read RLYS, TVG, and GGAS. Residues 520 to 521, 526 to 530, and Asp-562 contribute to the NADP(+) site; these read SR and KIYVQ. Tyr-600 provides a ligand contact to FAD.

The protein belongs to the NADPH-dependent sulphite reductase flavoprotein subunit CysJ family. It in the N-terminal section; belongs to the flavodoxin family. This sequence in the C-terminal section; belongs to the flavoprotein pyridine nucleotide cytochrome reductase family. Alpha(8)-beta(8). The alpha component is a flavoprotein, the beta component is a hemoprotein. FAD serves as cofactor. FMN is required as a cofactor.

The enzyme catalyses hydrogen sulfide + 3 NADP(+) + 3 H2O = sulfite + 3 NADPH + 4 H(+). It functions in the pathway sulfur metabolism; hydrogen sulfide biosynthesis; hydrogen sulfide from sulfite (NADPH route): step 1/1. Its function is as follows. Component of the sulfite reductase complex that catalyzes the 6-electron reduction of sulfite to sulfide. This is one of several activities required for the biosynthesis of L-cysteine from sulfate. The flavoprotein component catalyzes the electron flow from NADPH -&gt; FAD -&gt; FMN to the hemoprotein component. The sequence is that of Sulfite reductase [NADPH] flavoprotein alpha-component from Photorhabdus laumondii subsp. laumondii (strain DSM 15139 / CIP 105565 / TT01) (Photorhabdus luminescens subsp. laumondii).